Consider the following 546-residue polypeptide: Chaperonin GroEL 1 (546 aa).

ATP is bound by residues 30–33 (TLGP), lysine 51, 87–91 (DGTTT), glycine 415, 479–481 (NAA), and aspartate 495. Residues 526–546 (KEDAPMPGGMPGGMGGMGMDM) form a disordered region. Residues 534–546 (GMPGGMGGMGMDM) show a composition bias toward gly residues.

The protein belongs to the chaperonin (HSP60) family. As to quaternary structure, forms a cylinder of 14 subunits composed of two heptameric rings stacked back-to-back. Interacts with the co-chaperonin GroES.

The protein resides in the cytoplasm. The catalysed reaction is ATP + H2O + a folded polypeptide = ADP + phosphate + an unfolded polypeptide.. Its function is as follows. Together with its co-chaperonin GroES, plays an essential role in assisting protein folding. The GroEL-GroES system forms a nano-cage that allows encapsulation of the non-native substrate proteins and provides a physical environment optimized to promote and accelerate protein folding. The chain is Chaperonin GroEL 1 from Burkholderia ambifaria (strain ATCC BAA-244 / DSM 16087 / CCUG 44356 / LMG 19182 / AMMD) (Burkholderia cepacia (strain AMMD)).